The chain runs to 599 residues: Putative sensor histidine kinase NtrY-like (599 aa).

The next 4 membrane-spanning stretches (helical) occupy residues 17–37, 44–64, 85–105, and 285–305; these read VLIF…FYVI, FSTI…LGVV, IVIA…VFSV, and IMFI…GVIF. The HAMP domain maps to 307-361; sequence AKIVKPIKKLVTATDNVKDGDLTVQVPENEVDKDEIGTLYVAFNRMIKQLSRQQR. Residues 378–589 form the Histidine kinase domain; sequence KVAHEIKNPL…IIDIKFDLKE (212 aa). Phosphohistidine; by autocatalysis is present on His381.

The protein resides in the cell membrane. The catalysed reaction is ATP + protein L-histidine = ADP + protein N-phospho-L-histidine.. Its function is as follows. Member of the two-component regulatory system RC0948/RC0849. This chain is Putative sensor histidine kinase NtrY-like, found in Rickettsia conorii (strain ATCC VR-613 / Malish 7).